The chain runs to 550 residues: Zinc finger protein 382 (550 aa).

The mediates interaction with TRIM28 stretch occupies residues 1–105; it reads MPLQGSVSFK…RHSRPLIFIN (105 aa). Represses transcription stretches follow at residues 5–46 and 70–211; these read GSVS…FVSV and IFPS…PEQP. One can recognise a KRAB domain in the interval 7–78; sequence VSFKDVTVDF…RIFPSYSYLE (72 aa). Residues 212 to 234 form a C2H2-type 1; degenerate zinc finger; the sequence is FDHNECEKSFLMKGMLFTHTRAH. 9 C2H2-type zinc fingers span residues 296–318, 324–346, 352–374, 380–402, 408–430, 436–458, 464–486, 492–514, and 520–542; these read FHCP…QRIH, YVCN…EKTH, FICI…HKTH, YECP…QRTH, YQCN…QRTH, YICN…QRIH, YICN…HRIH, NGCP…QKTH, and YECK…QKTH. Residues 296 to 550 form a required for transcriptional repression activity; probably mediates sequence-specific DNA-binding region; the sequence is FHCPYCGNNF…THKVETTGIQ (255 aa).

The protein belongs to the krueppel C2H2-type zinc-finger protein family. Interacts with TRIM28; enhances the transcriptional repressor activity. Specifically expressed in heart with a weaker expression also detected in skeletal muscle.

Its subcellular location is the nucleus. Its function is as follows. Functions as a sequence-specific transcriptional repressor. The sequence is that of Zinc finger protein 382 (ZNF382) from Homo sapiens (Human).